Consider the following 132-residue polypeptide: MNIGEAAKKSGLTPKMIRYYESIELLRPAGRSASGYRHYNENDLHTLAFIRRSRDLGFSLDEVGKLLTLWQDRQRASADVKALAAQHVRELNRKIEELSTLRDTLQDLVEHCQGDHRPDCPILKDLASGCCH.

The region spanning 1–69 is the HTH merR-type domain; the sequence is MNIGEAAKKS…LDEVGKLLTL (69 aa). The H-T-H motif DNA-binding region spans 4-23; it reads GEAAKKSGLTPKMIRYYESI.

Its subcellular location is the cytoplasm. This is an uncharacterized protein from Pseudomonas aeruginosa (strain ATCC 15692 / DSM 22644 / CIP 104116 / JCM 14847 / LMG 12228 / 1C / PRS 101 / PAO1).